Here is a 161-residue protein sequence, read N- to C-terminus: uncharacterized protein (161 aa).

Disordered stretches follow at residues 1–67 (MNSN…IQNF) and 80–147 (DSHQ…KKKQ). Positions 84-126 (NFNDNGFNNNNNNNNSNMNHNFSNQNNYNNNNNNNNNNNSNFN) are enriched in low complexity. Over residues 135–147 (GTSSQVGNNKKKQ) the composition is skewed to polar residues.

This is an uncharacterized protein from Dictyostelium discoideum (Social amoeba).